The following is a 391-amino-acid chain: Na(+)/H(+) antiporter NhaA (391 aa).

11 consecutive transmembrane segments (helical) span residues 14-34 (AGGI…NSPL), 59-79 (LIHW…GLEV), 95-115 (SLPT…YLIF), 124-144 (VGWA…MALL), 154-174 (VFLL…IALF), 177-197 (TDLS…LIGL), 213-233 (LILW…GVII), 261-281 (FIIL…GMSL), 292-312 (IALG…YIAV), 331-351 (VAVM…LAFV), and 363-383 (LGIL…LSKV).

Belongs to the NhaA Na(+)/H(+) (TC 2.A.33) antiporter family.

The protein localises to the cell inner membrane. The enzyme catalyses Na(+)(in) + 2 H(+)(out) = Na(+)(out) + 2 H(+)(in). Na(+)/H(+) antiporter that extrudes sodium in exchange for external protons. This Shewanella pealeana (strain ATCC 700345 / ANG-SQ1) protein is Na(+)/H(+) antiporter NhaA.